The chain runs to 115 residues: Inner membrane protein YidH (115 aa).

The Cytoplasmic segment spans residues 1 to 30; the sequence is MKISRLGEAPDYRFSLANERTFLAWIRTAL. A helical transmembrane segment spans residues 31–51; it reads GFLAAGVGLDQLAPDFATPVI. At 52–53 the chain is on the periplasmic side; the sequence is RE. A helical transmembrane segment spans residues 54-74; it reads LLALLLCLFSGGLAMYGYLRW. The Cytoplasmic portion of the chain corresponds to 75 to 92; sequence LRNEKAMRLKEDLPYTNS. A helical transmembrane segment spans residues 93–113; that stretch reads LLIISLILMVVAVIVMGLVLY. Over 114-115 the chain is Periplasmic; it reads AG.

It to M.tuberculosis Rv2272.

The protein localises to the cell inner membrane. This Escherichia coli O157:H7 protein is Inner membrane protein YidH (yidH).